The sequence spans 426 residues: MLDAKLLRTDLDNIAQQLTKRNFVLDTEALSALEELRKAIQVKTQELQNERNTRSKSIGQAKARGEDIAPLLAHVSQLGNDLDAAKTEQDEVLAKIDAIASAIPNLLDDSVPEGKDEDDNVEVKRWGTPREFDFEVKDHVDLGFSVDKGLDFESGAKLAGTRFVVMRGKIARLHRAIAQFMLDTHTEEHGYQEMYVPYLVNAASLYGTGQLPKFGEDLFHTDLSNKKFSLIPTSEVPLTNLVRDEIVDEDDLPIKMTAHTPCFRSEAGSGGRDIRGLIRQHQFDKVEMVQIVKPETSMTALDELTRHAEIILEKLELPYRTVQLCSGDVGFSAAKTFDLEVWLPAQDTYREISSCSNMGAFQARRMQARFRNNETNKPELLHTLNGSGLAVGRTLVAILENYQQADGSINVPTVLQPYMGGLTNIG.

L-serine is bound at residue 233–235; sequence TSE. 264–266 serves as a coordination point for ATP; the sequence is RSE. An L-serine-binding site is contributed by glutamate 287. Residue 351 to 354 participates in ATP binding; the sequence is EISS. Serine 387 contributes to the L-serine binding site.

The protein belongs to the class-II aminoacyl-tRNA synthetase family. Type-1 seryl-tRNA synthetase subfamily. As to quaternary structure, homodimer. The tRNA molecule binds across the dimer.

Its subcellular location is the cytoplasm. The catalysed reaction is tRNA(Ser) + L-serine + ATP = L-seryl-tRNA(Ser) + AMP + diphosphate + H(+). The enzyme catalyses tRNA(Sec) + L-serine + ATP = L-seryl-tRNA(Sec) + AMP + diphosphate + H(+). It participates in aminoacyl-tRNA biosynthesis; selenocysteinyl-tRNA(Sec) biosynthesis; L-seryl-tRNA(Sec) from L-serine and tRNA(Sec): step 1/1. Its function is as follows. Catalyzes the attachment of serine to tRNA(Ser). Is also able to aminoacylate tRNA(Sec) with serine, to form the misacylated tRNA L-seryl-tRNA(Sec), which will be further converted into selenocysteinyl-tRNA(Sec). This Colwellia psychrerythraea (strain 34H / ATCC BAA-681) (Vibrio psychroerythus) protein is Serine--tRNA ligase.